Consider the following 456-residue polypeptide: Putative E3 ubiquitin-protein ligase XBAT31 (456 aa).

ANK repeat units follow at residues 45 to 74 (DRHSVLHVAAANGQIEILSLLLERFTNPDL), 78 to 107 (HKQTPLMLAAMYGRISCVKKLAEVGANILM), 112 to 141 (NRRTCLHYAAYYGHANCVQAILSAAQSSPV), 157 to 186 (KGATPLHLAARQRRPECVNVLLDSGSLVCA), and 194 to 224 (PGSTPLHLAARSGSIDCVRKLLAWGADRLQR). The RING-type zinc finger occupies 319-368 (CCICFEQVCTIEVKDCGHQMCAQCTLALCCHNKPNPTTSTVTPPVCPFCR).

The enzyme catalyses S-ubiquitinyl-[E2 ubiquitin-conjugating enzyme]-L-cysteine + [acceptor protein]-L-lysine = [E2 ubiquitin-conjugating enzyme]-L-cysteine + N(6)-ubiquitinyl-[acceptor protein]-L-lysine.. The protein operates within protein modification; protein ubiquitination. Its function is as follows. No E3 ubiquitin-protein ligase activity observed when associated with the E2 enzyme UBC8 in vitro. The sequence is that of Putative E3 ubiquitin-protein ligase XBAT31 (XBAT31) from Arabidopsis thaliana (Mouse-ear cress).